Consider the following 207-residue polypeptide: Probable isochorismatase (207 aa).

It belongs to the isochorismatase family.

The catalysed reaction is isochorismate + H2O = (2S,3S)-2,3-dihydroxy-2,3-dihydrobenzoate + pyruvate. The protein operates within antibiotic biosynthesis; phenazine biosynthesis. Its function is as follows. Involved in the biosynthesis of the antibiotic phenazine, a nitrogen-containing heterocyclic molecule having important roles in virulence, competition and biological control. This isochorismatase may remove pyruvate from chorismate during the formation of the phenazine ring structure and/or stabilize the phenazine biosynthetic complex. This is Probable isochorismatase (phzA) from Pseudomonas chlororaphis (Pseudomonas aureofaciens).